Here is a 513-residue protein sequence, read N- to C-terminus: Glutamate--tRNA ligase 2 (513 aa).

A 'HIGH' region motif is present at residues 11–21 (PSPSGFLHIGS). A 'KMSKS' region motif is present at residues 240 to 244 (KLSKR). An ATP-binding site is contributed by Lys-243.

It belongs to the class-I aminoacyl-tRNA synthetase family. Glutamate--tRNA ligase type 1 subfamily. As to quaternary structure, monomer.

It is found in the cytoplasm. It catalyses the reaction tRNA(Glu) + L-glutamate + ATP = L-glutamyl-tRNA(Glu) + AMP + diphosphate. Functionally, catalyzes the attachment of glutamate to tRNA(Glu) in a two-step reaction: glutamate is first activated by ATP to form Glu-AMP and then transferred to the acceptor end of tRNA(Glu). This is Glutamate--tRNA ligase 2 from Rickettsia massiliae (strain Mtu5).